A 138-amino-acid polypeptide reads, in one-letter code: Cysteine desulfuration protein SufE (138 aa).

Residue cysteine 51 is the Cysteine persulfide intermediate of the active site.

It belongs to the SufE family. Homodimer. Interacts with SufS.

The protein resides in the cytoplasm. It functions in the pathway cofactor biosynthesis; iron-sulfur cluster biosynthesis. In terms of biological role, participates in cysteine desulfuration mediated by SufS. Cysteine desulfuration mobilizes sulfur from L-cysteine to yield L-alanine and constitutes an essential step in sulfur metabolism for biosynthesis of a variety of sulfur-containing biomolecules. Functions as a sulfur acceptor for SufS, by mediating the direct transfer of the sulfur atom from the S-sulfanylcysteine of SufS, an intermediate product of cysteine desulfuration process. In Escherichia coli O157:H7, this protein is Cysteine desulfuration protein SufE.